A 360-amino-acid polypeptide reads, in one-letter code: DNA integrity scanning protein DisA (360 aa).

The region spanning 9–147 (DDEIIEVLRM…GSRKYILRET (139 aa)) is the DAC domain. ATP contacts are provided by residues Gly76, Leu94, and 107–111 (TRHKT).

Belongs to the DisA family. In terms of assembly, homooctamer. The cofactor is Mg(2+).

The enzyme catalyses 2 ATP = 3',3'-c-di-AMP + 2 diphosphate. Its function is as follows. Participates in a DNA-damage check-point that is active prior to asymmetric division when DNA is damaged. DisA forms globular foci that rapidly scan along the chromosomes during sporulation, searching for lesions. When a lesion is present, DisA pauses at the lesion site. This triggers a cellular response that culminates in a temporary block in sporulation initiation. In terms of biological role, also has diadenylate cyclase activity, catalyzing the condensation of 2 ATP molecules into cyclic di-AMP (c-di-AMP). c-di-AMP acts as a signaling molecule that couples DNA integrity with progression of sporulation. The rise in c-di-AMP level generated by DisA while scanning the chromosome, operates as a positive signal that advances sporulation; upon encountering a lesion, the DisA focus arrests at the damaged site and halts c-di-AMP synthesis. The sequence is that of DNA integrity scanning protein DisA from Acetivibrio thermocellus (strain ATCC 27405 / DSM 1237 / JCM 9322 / NBRC 103400 / NCIMB 10682 / NRRL B-4536 / VPI 7372) (Clostridium thermocellum).